Here is a 377-residue protein sequence, read N- to C-terminus: N-acetyldiaminopimelate deacetylase (377 aa).

Asp-70 is an active-site residue. Catalysis depends on Glu-129, which acts as the Proton acceptor.

The protein belongs to the peptidase M20A family. N-acetyldiaminopimelate deacetylase subfamily.

It catalyses the reaction N-acetyl-(2S,6S)-2,6-diaminopimelate + H2O = (2S,6S)-2,6-diaminopimelate + acetate. It participates in amino-acid biosynthesis; L-lysine biosynthesis via DAP pathway; LL-2,6-diaminopimelate from (S)-tetrahydrodipicolinate (acetylase route): step 3/3. Functionally, catalyzes the conversion of N-acetyl-diaminopimelate to diaminopimelate and acetate. The chain is N-acetyldiaminopimelate deacetylase from Streptococcus thermophilus (strain CNRZ 1066).